Here is a 229-residue protein sequence, read N- to C-terminus: Ribonuclease T (229 aa).

Residues 23–197 (VIIDVETAGF…YDTERTAKLF (175 aa)) enclose the Exonuclease domain. Mg(2+)-binding residues include Asp26, Glu28, His184, and Asp189. The active-site Proton donor/acceptor is His184.

This sequence belongs to the RNase T family. In terms of assembly, homodimer. Requires Mg(2+) as cofactor.

Trims short 3' overhangs of a variety of RNA species, leaving a one or two nucleotide 3' overhang. Responsible for the end-turnover of tRNA: specifically removes the terminal AMP residue from uncharged tRNA (tRNA-C-C-A). Also appears to be involved in tRNA biosynthesis. The chain is Ribonuclease T from Haemophilus influenzae (strain PittGG).